A 626-amino-acid polypeptide reads, in one-letter code: Zinc finger protein 471 (626 aa).

The 72-residue stretch at 14–85 (VTFKDVAIDF…TSEMTRSPFS (72 aa)) folds into the KRAB domain. 15 C2H2-type zinc fingers span residues 206–228 (FKCNECDKTFTHSSSLTVHFRIH), 234–256 (YACEECGKAFKQRQHLAQHHRTH), 262–284 (FECKECRKAFKQSEHLIQHQRIH), 290–312 (YKCKECRKAFRQPAHLAQHQRIH), 318–340 (YECKECGKAFSDGSSFARHQRCH), 346–369 (YECIECGKAFRYNTSFIRHWRSYH), 375–397 (FNCIDCGKAFSVHIGLILHRRIH), 403–425 (YKCGVCGKTFSSGSSRTVHQRIH), 431–453 (YECDICGKDFSHHASLTQHQRVH), 459–481 (YECKECGKAFRQNVHLVSHLRIH), 487–509 (YECKECGKAFRISSQLATHQRIH), 515–537 (YECIECGNAFKQRSHLAQHQKTH), 543–565 (YECNECGKAFSQTSNLTQHQRIH), 571–593 (YKCTECGKAFSDSSSCAQHQRLH), and 599–621 (YQCFECGKAFRRKLSLICHQRSH).

This sequence belongs to the krueppel C2H2-type zinc-finger protein family.

The protein resides in the nucleus. Functionally, may be involved in transcriptional regulation. In Homo sapiens (Human), this protein is Zinc finger protein 471 (ZNF471).